A 201-amino-acid polypeptide reads, in one-letter code: Recombination protein RecR (201 aa).

The C4-type zinc-finger motif lies at 60-75; sequence CSCCGNVDTIDPCTVC. The Toprim domain maps to 83 to 178; the sequence is SVIIVVEDVA…KITRLAHGVP (96 aa).

This sequence belongs to the RecR family.

May play a role in DNA repair. It seems to be involved in an RecBC-independent recombinational process of DNA repair. It may act with RecF and RecO. The chain is Recombination protein RecR from Sinorhizobium fredii (strain NBRC 101917 / NGR234).